A 468-amino-acid polypeptide reads, in one-letter code: RUS family member 1 (468 aa).

Position 2 is an N-acetylalanine (A2). Position 49 is a phosphothreonine (T49). Residues 247 to 267 (LLMLPLVSGCPGFSLGCFFFL) traverse the membrane as a helical segment.

Belongs to the RUS1 family.

The protein localises to the membrane. In Homo sapiens (Human), this protein is RUS family member 1.